A 192-amino-acid polypeptide reads, in one-letter code: Bifunctional protein PyrR (192 aa).

Residues S49 to G50, R90, D111 to T119, R144, and V168 each bind substrate. Residues V107–T119 carry the PRPP-binding motif.

It belongs to the purine/pyrimidine phosphoribosyltransferase family. PyrR subfamily.

It carries out the reaction UMP + diphosphate = 5-phospho-alpha-D-ribose 1-diphosphate + uracil. Its function is as follows. Regulates the transcription of the pyrimidine nucleotide (pyr) operon in response to exogenous pyrimidines. Also displays a weak uracil phosphoribosyltransferase activity which is not physiologically significant. The chain is Bifunctional protein PyrR from Corynebacterium glutamicum (strain ATCC 13032 / DSM 20300 / JCM 1318 / BCRC 11384 / CCUG 27702 / LMG 3730 / NBRC 12168 / NCIMB 10025 / NRRL B-2784 / 534).